A 176-amino-acid chain; its full sequence is MSLKPFTYPFPETRFLHAGPNVYKFKIRYGKSIRGEEIENKEVITQELEVPVEKKAVGAVMRKRKHMDEPSSPSRPGLDRAKIGTSSQGPSKKKPPVETRRNRERKTQQGLQETLASDITDVQKQDSEWGHSLPGRIVPPLQHNSPPPKERAATGFFGFLSSLFPFRYFFRKSSHS.

Over 1-151 (MSLKPFTYPF…QHNSPPPKER (151 aa)) the chain is Nuclear. The interval 59–150 (AVMRKRKHMD…LQHNSPPPKE (92 aa)) is disordered. Positions 95 to 107 (PPVETRRNRERKT) are enriched in basic and acidic residues. A compositionally biased stretch (polar residues) spans 108-120 (QQGLQETLASDIT). The chain crosses the membrane as a helical span at residues 152–170 (AATGFFGFLSSLFPFRYFF). The Perinuclear space portion of the chain corresponds to 171-176 (RKSSHS).

This sequence belongs to the MAJIN family. As to quaternary structure, component of the MAJIN-TERB1-TERB2 complex, composed of MAJIN, TERB1 and TERB2.

The protein localises to the nucleus inner membrane. It is found in the chromosome. The protein resides in the telomere. In terms of biological role, meiosis-specific telomere-associated protein involved in meiotic telomere attachment to the nucleus inner membrane, a crucial step for homologous pairing and synapsis. Component of the MAJIN-TERB1-TERB2 complex, which promotes telomere cap exchange by mediating attachment of telomeric DNA to the inner nuclear membrane and replacement of the protective cap of telomeric chromosomes: in early meiosis, the MAJIN-TERB1-TERB2 complex associates with telomeric DNA and the shelterin/telosome complex. During prophase, the complex matures and promotes release of the shelterin/telosome complex from telomeric DNA. In the complex, MAJIN acts as the anchoring subunit to the nucleus inner membrane. MAJIN shows DNA-binding activity, possibly for the stabilization of telomere attachment on the nucleus inner membrane. This chain is Membrane-anchored junction protein, found in Homo sapiens (Human).